The sequence spans 312 residues: Glyoxylate/hydroxypyruvate reductase A (312 aa).

Residue arginine 227 is part of the active site. Residue histidine 275 is the Proton donor of the active site.

Belongs to the D-isomer specific 2-hydroxyacid dehydrogenase family. GhrA subfamily.

Its subcellular location is the cytoplasm. It catalyses the reaction glycolate + NADP(+) = glyoxylate + NADPH + H(+). The catalysed reaction is (R)-glycerate + NAD(+) = 3-hydroxypyruvate + NADH + H(+). The enzyme catalyses (R)-glycerate + NADP(+) = 3-hydroxypyruvate + NADPH + H(+). Functionally, catalyzes the NADPH-dependent reduction of glyoxylate and hydroxypyruvate into glycolate and glycerate, respectively. Inactive towards 2-oxo-D-gluconate, 2-oxoglutarate, oxaloacetate and pyruvate. Only D- and L-glycerate are involved in the oxidative activity with NADP. Activity with NAD is very low. The sequence is that of Glyoxylate/hydroxypyruvate reductase A (ghrA) from Escherichia coli (strain K12).